Reading from the N-terminus, the 375-residue chain is Alcohol dehydrogenase 1 (375 aa).

N-acetylserine is present on serine 1. 7 residues coordinate Zn(2+): cysteine 46, histidine 67, cysteine 97, cysteine 100, cysteine 103, cysteine 111, and cysteine 174. NAD(+)-binding positions include 199 to 204 (GLGGVG), aspartate 223, lysine 228, 293 to 295 (VGV), and arginine 370.

This sequence belongs to the zinc-containing alcohol dehydrogenase family. Class-I subfamily. Homodimer. It depends on Zn(2+) as a cofactor.

Its subcellular location is the cytoplasm. It catalyses the reaction a primary alcohol + NAD(+) = an aldehyde + NADH + H(+). The catalysed reaction is a secondary alcohol + NAD(+) = a ketone + NADH + H(+). This chain is Alcohol dehydrogenase 1, found in Naja naja (Indian cobra).